The following is a 446-amino-acid chain: Exodeoxyribonuclease 7 large subunit (446 aa).

Belongs to the XseA family. As to quaternary structure, heterooligomer composed of large and small subunits.

The protein resides in the cytoplasm. It carries out the reaction Exonucleolytic cleavage in either 5'- to 3'- or 3'- to 5'-direction to yield nucleoside 5'-phosphates.. In terms of biological role, bidirectionally degrades single-stranded DNA into large acid-insoluble oligonucleotides, which are then degraded further into small acid-soluble oligonucleotides. The sequence is that of Exodeoxyribonuclease 7 large subunit from Acholeplasma laidlawii (strain PG-8A).